A 190-amino-acid polypeptide reads, in one-letter code: Photosynthetic NDH subunit of lumenal location 2, chloroplastic (190 aa).

The N-terminal 31 residues, 1-31 (MSSFTTTNTPPPYLLRKIYHRRVNQPFSVVC), are a transit peptide targeting the chloroplast. The transit peptide at 32–68 (CTGEPQQDIFTRRRTLTSLITFTVIGGATSSALAQEK) directs the protein to the thylakoid. Coiled coils occupy residues 87-107 (EDAAARIKQTAEGLRDMREML) and 139-159 (ESRRNDYVQAANELVENMSEL).

This sequence belongs to the PsbQ family. In terms of assembly, part of the chloroplast NDH complex, composed of a mixture of chloroplast and nucleus encoded subunits. Component of the NDH lumenal subcomplex, at least composed of PnsL1, PnsL2, PnsL3, PnsL4 and PnsL5.

The protein localises to the plastid. It localises to the chloroplast thylakoid membrane. NDH shuttles electrons from NAD(P)H:plastoquinone, via FMN and iron-sulfur (Fe-S) centers, to quinones in the photosynthetic chain and possibly in a chloroplast respiratory chain. The immediate electron acceptor for the enzyme in this species is believed to be plastoquinone. Couples the redox reaction to proton translocation, and thus conserves the redox energy in a proton gradient. Required for both formation and activity of the chloroplast NAD(P)H dehydrogenase (NDH) complex. In Arabidopsis thaliana (Mouse-ear cress), this protein is Photosynthetic NDH subunit of lumenal location 2, chloroplastic.